The primary structure comprises 79 residues: Pyridoxal 5'-phosphate synthase PDX1-like 4 (79 aa).

It belongs to the PdxS/SNZ family.

The polypeptide is Pyridoxal 5'-phosphate synthase PDX1-like 4 (PDX1L4) (Arabidopsis thaliana (Mouse-ear cress)).